The sequence spans 208 residues: dITP/XTP pyrophosphatase (208 aa).

Ser-16–Lys-21 is a binding site for substrate. The active-site Proton acceptor is Asp-79. Asp-79 provides a ligand contact to Mg(2+). Substrate-binding positions include Ser-80, Phe-166–Asp-169, Lys-189, and His-194–Arg-195.

Belongs to the HAM1 NTPase family. In terms of assembly, homodimer. Mg(2+) is required as a cofactor.

It catalyses the reaction XTP + H2O = XMP + diphosphate + H(+). It carries out the reaction dITP + H2O = dIMP + diphosphate + H(+). The enzyme catalyses ITP + H2O = IMP + diphosphate + H(+). In terms of biological role, pyrophosphatase that catalyzes the hydrolysis of nucleoside triphosphates to their monophosphate derivatives, with a high preference for the non-canonical purine nucleotides XTP (xanthosine triphosphate), dITP (deoxyinosine triphosphate) and ITP. Seems to function as a house-cleaning enzyme that removes non-canonical purine nucleotides from the nucleotide pool, thus preventing their incorporation into DNA/RNA and avoiding chromosomal lesions. The sequence is that of dITP/XTP pyrophosphatase from Acinetobacter baumannii (strain AB307-0294).